A 197-amino-acid polypeptide reads, in one-letter code: Glycerol-3-phosphate acyltransferase (197 aa).

The next 5 helical transmembrane spans lie at 1-21 (MNILIIFASYLLGSLPTGFLI), 78-98 (LIEVIAGISAISGHIWPIWLG), 111-131 (MFLALSWKVGLASLGIFLIVL), 136-155 (FVSLSSISAAILLPIFMFFY), and 159-176 (FIHTYFFISLIVALLVIW).

Belongs to the PlsY family. In terms of assembly, probably interacts with PlsX.

It is found in the cell inner membrane. The enzyme catalyses an acyl phosphate + sn-glycerol 3-phosphate = a 1-acyl-sn-glycero-3-phosphate + phosphate. Its pathway is lipid metabolism; phospholipid metabolism. Its function is as follows. Catalyzes the transfer of an acyl group from acyl-phosphate (acyl-PO(4)) to glycerol-3-phosphate (G3P) to form lysophosphatidic acid (LPA). This enzyme utilizes acyl-phosphate as fatty acyl donor, but not acyl-CoA or acyl-ACP. In Prochlorococcus marinus (strain MIT 9215), this protein is Glycerol-3-phosphate acyltransferase.